The primary structure comprises 286 residues: ATP synthase gamma chain (286 aa).

Belongs to the ATPase gamma chain family. In terms of assembly, F-type ATPases have 2 components, CF(1) - the catalytic core - and CF(0) - the membrane proton channel. CF(1) has five subunits: alpha(3), beta(3), gamma(1), delta(1), epsilon(1). CF(0) has three main subunits: a, b and c.

The protein resides in the cell inner membrane. Produces ATP from ADP in the presence of a proton gradient across the membrane. The gamma chain is believed to be important in regulating ATPase activity and the flow of protons through the CF(0) complex. In Pseudomonas fluorescens (strain ATCC BAA-477 / NRRL B-23932 / Pf-5), this protein is ATP synthase gamma chain.